Consider the following 279-residue polypeptide: Large ribosomal subunit protein mL46 (279 aa).

Lysine 230 is subject to N6-acetyllysine.

The protein belongs to the mitochondrion-specific ribosomal protein mL46 family. As to quaternary structure, component of the mitochondrial ribosome large subunit (39S) which comprises a 16S rRNA and about 50 distinct proteins.

It localises to the mitochondrion. The chain is Large ribosomal subunit protein mL46 (MRPL46) from Pongo abelii (Sumatran orangutan).